A 471-amino-acid polypeptide reads, in one-letter code: ATP synthase subunit beta (471 aa).

ATP is bound at residue 156 to 163 (GGAGVGKT).

The protein belongs to the ATPase alpha/beta chains family. As to quaternary structure, F-type ATPases have 2 components, CF(1) - the catalytic core - and CF(0) - the membrane proton channel. CF(1) has five subunits: alpha(3), beta(3), gamma(1), delta(1), epsilon(1). CF(0) has three main subunits: a(1), b(2) and c(9-12). The alpha and beta chains form an alternating ring which encloses part of the gamma chain. CF(1) is attached to CF(0) by a central stalk formed by the gamma and epsilon chains, while a peripheral stalk is formed by the delta and b chains.

Its subcellular location is the cell membrane. It carries out the reaction ATP + H2O + 4 H(+)(in) = ADP + phosphate + 5 H(+)(out). Its function is as follows. Produces ATP from ADP in the presence of a proton gradient across the membrane. The catalytic sites are hosted primarily by the beta subunits. In Lysinibacillus sphaericus (strain C3-41), this protein is ATP synthase subunit beta.